We begin with the raw amino-acid sequence, 605 residues long: Ankyrin repeat domain-containing protein 13D (605 aa).

UIM domains are found at residues 482 to 501 (EDDDLLQFAIQQSLLEAGTE) and 528 to 547 (EEQLQLEQALQESLQLSTES). Over residues 538–554 (QESLQLSTESRGPESPQ) the composition is skewed to low complexity. Positions 538–605 (QESLQLSTES…RILQLSLTEH (68 aa)) are disordered. The residue at position 552 (S552) is a Phosphoserine. A Phosphothreonine modification is found at T556. A compositionally biased stretch (low complexity) spans 564 to 575 (SFEEQLRLALEL). UIM domains lie at 564 to 583 (SFEEQLRLALELSSREQEEL) and 589 to 605 (QEEDDLQRILQLSLTEH). A compositionally biased stretch (basic and acidic residues) spans 576–589 (SSREQEELERRGQQ).

As to quaternary structure, interacts with EGFR (ubiquitinated); the interaction is direct and may regulate EGFR internalization.

It is found in the cell membrane. Its subcellular location is the late endosome. Ubiquitin-binding protein that specifically recognizes and binds 'Lys-63'-linked ubiquitin. Does not bind 'Lys-48'-linked ubiquitin. Positively regulates the internalization of ligand-activated EGFR by binding to the Ub moiety of ubiquitinated EGFR at the cell membrane. This Mus musculus (Mouse) protein is Ankyrin repeat domain-containing protein 13D (Ankrd13d).